Here is a 618-residue protein sequence, read N- to C-terminus: Chaperone protein HtpG (618 aa).

Residues 1 to 331 form an a; substrate-binding region; that stretch reads MAKHTFQTEV…SEDLPLNVSR (331 aa). A b region spans residues 332-541; the sequence is EILQQNRILA…EDDPNFAMIK (210 aa). The c stretch occupies residues 542–618; that stretch reads MMRQMGNALG…RLNAMLERAI (77 aa).

The protein belongs to the heat shock protein 90 family. In terms of assembly, homodimer.

It is found in the cytoplasm. Functionally, molecular chaperone. Has ATPase activity. The chain is Chaperone protein HtpG from Wolinella succinogenes (strain ATCC 29543 / DSM 1740 / CCUG 13145 / JCM 31913 / LMG 7466 / NCTC 11488 / FDC 602W) (Vibrio succinogenes).